A 283-amino-acid chain; its full sequence is uncharacterized protein (283 aa).

Residues 1 to 10 (MELNKTSESL) show a composition bias toward polar residues. Disordered stretches follow at residues 1–99 (MELN…NPTS) and 255–283 (DQEG…EAHI). Basic and acidic residues-rich tracts occupy residues 14 to 34 (KIDH…REVR), 42 to 53 (SSTRQEKADRMP), and 61 to 71 (ESSKGSEEGAV).

This sequence belongs to the chlamydial CPn_0705/CT_671/TC_0042 family.

This is an uncharacterized protein from Chlamydia trachomatis serovar D (strain ATCC VR-885 / DSM 19411 / UW-3/Cx).